The following is a 448-amino-acid chain: Dual specificity mitogen-activated protein kinase kinase 5 (448 aa).

The tract at residues Val-18–Asn-25 is interaction with MAPK7. In terms of domain architecture, PB1 spans Val-18–Cys-109. The segment at Asp-64–Asp-68 is interaction with MAP3K2/MAP3K3. The interval Asn-116–Ser-144 is disordered. An interaction with MAPK7 region spans residues Ile-117–His-131. Residues Ala-126–Ser-144 show a composition bias toward polar residues. Residues Ile-166–Ile-419 enclose the Protein kinase domain. Residues Leu-172–Val-180 and Lys-195 each bind ATP. Asp-283 serves as the catalytic Proton acceptor. At Ser-311 the chain carries Phosphoserine. The residue at position 315 (Thr-315) is a Phosphothreonine.

This sequence belongs to the protein kinase superfamily. STE Ser/Thr protein kinase family. MAP kinase kinase subfamily. Interacts with PARD6A, MAP3K3 and MAPK7. Forms a complex with SQSTM1 and PRKCZ or PRKCI. The cofactor is Mg(2+). Post-translationally, activated by phosphorylation on Ser/Thr by MAP kinase kinase kinases.

It localises to the cytoplasm. It carries out the reaction L-seryl-[protein] + ATP = O-phospho-L-seryl-[protein] + ADP + H(+). It catalyses the reaction L-threonyl-[protein] + ATP = O-phospho-L-threonyl-[protein] + ADP + H(+). The enzyme catalyses L-tyrosyl-[protein] + ATP = O-phospho-L-tyrosyl-[protein] + ADP + H(+). Acts as a scaffold for the formation of a ternary MAP3K2/MAP3K3-MAP3K5-MAPK7 signaling complex. Activation of this pathway appears to play a critical role in protecting cells from stress-induced apoptosis, neuronal survival and cardiac development and angiogenesis. As part of the MAPK/ERK signaling pathway, acts as a negative regulator of apoptosis in cardiomyocytes via promotion of STUB1/CHIP-mediated ubiquitination and degradation of ICER-type isoforms of CREM. In Mus musculus (Mouse), this protein is Dual specificity mitogen-activated protein kinase kinase 5 (Map2k5).